Reading from the N-terminus, the 239-residue chain is MTEPVYKRILLKLSGEALMGDQGAGIDAEILKRLATEIDELCQAGVEVGLVIGGGNIVRGAEKASEGLDRVTGDHMGMLATVINALAMQDALENLGRPVRVMSALKINQVCEDYIRRRAVRHLEKGRVVVFAAGTGNPFFTTDSAASLRAIEIGADLLIKATKVDGVYSADPVKNPEAKFYTRLTYDEALDQRLNVMDTTALVLCRDYKMPLRVMNVFRQGAVMRLIRGDDIGSLLVTG.

ATP is bound at residue 12–15; the sequence is KLSG. The tract at residues 20-25 is involved in allosteric activation by GTP; the sequence is GDQGAG. A UMP-binding site is contributed by Gly-54. The ATP site is built by Gly-55 and Arg-59. UMP-binding positions include Asp-74 and 135 to 142; that span reads TGNPFFTT. Positions 162, 168, and 171 each coordinate ATP.

Belongs to the UMP kinase family. In terms of assembly, homohexamer.

It is found in the cytoplasm. It carries out the reaction UMP + ATP = UDP + ADP. Its pathway is pyrimidine metabolism; CTP biosynthesis via de novo pathway; UDP from UMP (UMPK route): step 1/1. Its activity is regulated as follows. Allosterically activated by GTP. Inhibited by UTP. Catalyzes the reversible phosphorylation of UMP to UDP. This Methylococcus capsulatus (strain ATCC 33009 / NCIMB 11132 / Bath) protein is Uridylate kinase.